We begin with the raw amino-acid sequence, 217 residues long: 3,4-dihydroxy-2-butanone 4-phosphate synthase (217 aa).

D-ribulose 5-phosphate contacts are provided by residues 37–38, Asp42, 150–154, and Glu174; these read RE and RGGHT. A Mg(2+)-binding site is contributed by Glu38. Residue His153 participates in Mg(2+) binding.

The protein belongs to the DHBP synthase family. In terms of assembly, homodimer. It depends on Mg(2+) as a cofactor. The cofactor is Mn(2+).

It carries out the reaction D-ribulose 5-phosphate = (2S)-2-hydroxy-3-oxobutyl phosphate + formate + H(+). Its pathway is cofactor biosynthesis; riboflavin biosynthesis; 2-hydroxy-3-oxobutyl phosphate from D-ribulose 5-phosphate: step 1/1. Its function is as follows. Catalyzes the conversion of D-ribulose 5-phosphate to formate and 3,4-dihydroxy-2-butanone 4-phosphate. The protein is 3,4-dihydroxy-2-butanone 4-phosphate synthase of Enterobacter sp. (strain 638).